Reading from the N-terminus, the 374-residue chain is Fasciclin-like arabinogalactan protein CTB11 (374 aa).

A signal peptide spans 1 to 18 (MHFPALAVAGCLLSRATA). FAS1 domains lie at 19–171 (QSLD…DANM) and 173–302 (LPHN…DGAL). N52, N72, N120, N132, and N176 each carry an N-linked (GlcNAc...) asparagine glycan. A helical transmembrane segment spans residues 328–348 (ILASHQLTLLAVLAMALVSIL).

The protein belongs to the fasciclin-like AGP family.

The protein localises to the membrane. The protein operates within mycotoxin biosynthesis. In terms of biological role, fasciclin-like arabinogalactan protein; part of the gene cluster that mediates the biosynthesis of cercosporin, a light-activated, non-host-selective toxin. The perylenequinone chromophore of cercosporin absorbs light energy to attain an electronically-activated triplet state and produces active oxygen species such as the hydroxyl radical, superoxide, hydrogen peroxide or singlet oxygen upon reaction with oxygen molecules. These reactive oxygen species cause damage to various cellular components including lipids, proteins and nucleic acids. The first step of cercosporin biosynthesis is performed by the polyketide synthase CTB1 which catalyzes the formation of nor-toralactone. The starter unit acyltransferase (SAT) domain of CTB1 initiates polyketide extension by the selective utilization of acetyl-CoA, which is elongated to the heptaketide in the beta-ketoacyl synthase (KS) domain by successive condensations with six malonyl units introduced by the malonyl acyltransferase (MAT) domain. The product template (PT) domain catalyzes C4-C9 and C2-C11 aldol cyclizations and dehydrations to a trihydroxynaphthalene, which is thought to be delivered to the thioesterase (TE) domain for product release. The bifunctional enzyme CTB3 then methylates nor-toralactone to toralactone before conducting an unusual oxidative aromatic ring opening. The O-methyltransferase CTB2 further methylates the nascent OH-6 of the CBT3 product, blocking further oxidation at this site before the reductase CTB6 reduces the 2-oxopropyl ketone at position C7, giving naphthalene. The FAD-dependent monooxygenase CTB5 in concert with the multicopper oxidase CTB12 are responsible for homodimerization of naphthalene with CTB7 installing the dioxepine moiety, finally producing cercosporin. The fasciclin domain-containing protein CTB11 might act with CTB5 and CTB12 whereas the roles of CTB9 and CTB10 have still to be elucidated. In Cercospora beticola (Sugarbeet leaf spot fungus), this protein is Fasciclin-like arabinogalactan protein CTB11.